Reading from the N-terminus, the 449-residue chain is Methylenetetrahydrofolate--tRNA-(uracil-5-)-methyltransferase TrmFO (449 aa).

FAD is bound at residue 9–14 (GGGMAG).

It belongs to the MnmG family. TrmFO subfamily. FAD is required as a cofactor.

It localises to the cytoplasm. It catalyses the reaction uridine(54) in tRNA + (6R)-5,10-methylene-5,6,7,8-tetrahydrofolate + NADH + H(+) = 5-methyluridine(54) in tRNA + (6S)-5,6,7,8-tetrahydrofolate + NAD(+). The catalysed reaction is uridine(54) in tRNA + (6R)-5,10-methylene-5,6,7,8-tetrahydrofolate + NADPH + H(+) = 5-methyluridine(54) in tRNA + (6S)-5,6,7,8-tetrahydrofolate + NADP(+). Its function is as follows. Catalyzes the folate-dependent formation of 5-methyl-uridine at position 54 (M-5-U54) in all tRNAs. This Ruegeria pomeroyi (strain ATCC 700808 / DSM 15171 / DSS-3) (Silicibacter pomeroyi) protein is Methylenetetrahydrofolate--tRNA-(uracil-5-)-methyltransferase TrmFO.